The sequence spans 432 residues: Asparagine--tRNA ligase (432 aa).

It belongs to the class-II aminoacyl-tRNA synthetase family. In terms of assembly, homodimer.

The protein resides in the cytoplasm. It catalyses the reaction tRNA(Asn) + L-asparagine + ATP = L-asparaginyl-tRNA(Asn) + AMP + diphosphate + H(+). This Lactobacillus delbrueckii subsp. bulgaricus (strain ATCC 11842 / DSM 20081 / BCRC 10696 / JCM 1002 / NBRC 13953 / NCIMB 11778 / NCTC 12712 / WDCM 00102 / Lb 14) protein is Asparagine--tRNA ligase.